Consider the following 156-residue polypeptide: Flagellar assembly factor FliW (156 aa).

Belongs to the FliW family. Interacts with translational regulator CsrA and flagellin(s).

The protein localises to the cytoplasm. Its function is as follows. Acts as an anti-CsrA protein, binds CsrA and prevents it from repressing translation of its target genes, one of which is flagellin. Binds to flagellin and participates in the assembly of the flagellum. The protein is Flagellar assembly factor FliW of Lachnoclostridium phytofermentans (strain ATCC 700394 / DSM 18823 / ISDg) (Clostridium phytofermentans).